Consider the following 199-residue polypeptide: Charged multivesicular body protein 1b (199 aa).

2 coiled-coil regions span residues 10–30 (NLKFAAKELQRNSKKCDKEEK) and 178–199 (TSVASAEQDELSQRLAKLRDQV). Positions 167 to 199 (ELPQGQTGSVGTSVASAEQDELSQRLAKLRDQV) are disordered. A compositionally biased stretch (polar residues) spans 170 to 182 (QGQTGSVGTSVAS). Positions 186–196 (DELSQRLAKLR) match the MIT-interacting motif motif.

Belongs to the SNF7 family. In terms of assembly, probable peripherally associated component of the endosomal sorting required for transport complex III (ESCRT-III).

It localises to the cytoplasm. Its subcellular location is the cytosol. The protein localises to the endosome. It is found in the late endosome membrane. Probable peripherally associated component of the endosomal sorting required for transport complex III (ESCRT-III) which is involved in multivesicular bodies (MVBs) formation and sorting of endosomal cargo proteins into MVBs. MVBs contain intraluminal vesicles (ILVs) that are generated by invagination and scission from the limiting membrane of the endosome and mostly are delivered to lysosomes enabling degradation of membrane proteins, such as stimulated growth factor receptors, lysosomal enzymes and lipids. This Danio rerio (Zebrafish) protein is Charged multivesicular body protein 1b (chmp1b).